Reading from the N-terminus, the 342-residue chain is Adenylate isopentenyltransferase 6, chloroplastic (342 aa).

The transit peptide at 1–33 (MQQLMTLLSPPLSHSSLLPTVTTKFGSPRLVTT) directs the protein to the chloroplast. Position 52–59 (52–59 (GTTGTGKS)) interacts with ATP.

It belongs to the IPP transferase family. In terms of tissue distribution, expressed in siliques, at the mRNA level.

Its subcellular location is the plastid. It localises to the chloroplast. The catalysed reaction is dimethylallyl diphosphate + ADP = N(6)-(dimethylallyl)adenosine 5'-diphosphate + diphosphate. The enzyme catalyses dimethylallyl diphosphate + ATP = N(6)-(dimethylallyl)adenosine 5'-triphosphate + diphosphate. In terms of biological role, involved in cytokinin biosynthesis. Catalyzes the transfer of an isopentenyl group from dimethylallyl diphosphate (DMAPP) to ATP and ADP. In Arabidopsis thaliana (Mouse-ear cress), this protein is Adenylate isopentenyltransferase 6, chloroplastic (IPT6).